The sequence spans 348 residues: sn-glycerol-3-phosphate import ATP-binding protein UgpC 3 (348 aa).

The 231-residue stretch at 4-234 (INIIDVKKNY…PASLFVASFI (231 aa)) folds into the ABC transporter domain. ATP is bound at residue 36–43 (GPSGCGKS).

This sequence belongs to the ABC transporter superfamily. sn-glycerol-3-phosphate importer (TC 3.A.1.1.3) family. The complex is composed of two ATP-binding proteins (UgpC), two transmembrane proteins (UgpA and UgpE) and a solute-binding protein (UgpB).

The protein resides in the cell inner membrane. The enzyme catalyses sn-glycerol 3-phosphate(out) + ATP + H2O = sn-glycerol 3-phosphate(in) + ADP + phosphate + H(+). Functionally, part of the ABC transporter complex UgpBAEC involved in sn-glycerol-3-phosphate (G3P) import. Responsible for energy coupling to the transport system. In Rhizobium johnstonii (strain DSM 114642 / LMG 32736 / 3841) (Rhizobium leguminosarum bv. viciae), this protein is sn-glycerol-3-phosphate import ATP-binding protein UgpC 3.